Here is a 128-residue protein sequence, read N- to C-terminus: Protein 2B* (128 aa).

2 disordered regions span residues 1–27 (PFMF…NPTA) and 92–128 (RDDN…RNSS). Residues 18–27 (SVINGSNPTA) are compositionally biased toward polar residues. Over residues 111–128 (IDGRRDYKPDKSVRRNSS) the composition is skewed to basic and acidic residues.

It belongs to the encephalomyocarditis virus protein 2B* family.

The sequence is that of Protein 2B* from Aotus trivirgatus (Three-striped night monkey).